A 554-amino-acid polypeptide reads, in one-letter code: Phosphoglucomutase (554 aa).

Arg-21 contributes to the alpha-D-glucose 1,6-bisphosphate binding site. Thr-111 bears the Phosphothreonine mark. Alpha-D-glucose 1,6-bisphosphate is bound at residue Ser-113. The active-site Phosphoserine intermediate is Ser-113. Mg(2+) contacts are provided by Ser-113, Asp-278, Asp-280, and Asp-282. Ser-113 is subject to Phosphoserine. The alpha-D-glucose 1,6-bisphosphate site is built by Asp-282, Arg-283, Thr-346, Glu-365, Ser-367, and Lys-378.

It belongs to the phosphohexose mutase family. Monomer. Mg(2+) serves as cofactor.

The protein localises to the cytoplasm. It is found in the nucleus. The catalysed reaction is alpha-D-glucose 1-phosphate = alpha-D-glucose 6-phosphate. It catalyses the reaction O-phospho-L-seryl-[protein] + alpha-D-glucose 1-phosphate = alpha-D-glucose 1,6-bisphosphate + L-seryl-[protein]. It carries out the reaction alpha-D-glucose 1,6-bisphosphate + L-seryl-[protein] = O-phospho-L-seryl-[protein] + alpha-D-glucose 6-phosphate. Catalyzes the reversible isomerization of alpha-D-glucose 1-phosphate to alpha-D-glucose 6-phosphate. The mechanism proceeds via the intermediate compound alpha-D-glucose 1,6-bisphosphate. Key enzyme in hexose metabolism. The reverse reaction is an essential step for biosynthesis because glucose 1-phosphate is the starting point for the synthesis of UDP-glucose, which acts as a precursor for the synthesis of oligosaccharides and trehalose. The polypeptide is Phosphoglucomutase (Schizosaccharomyces pombe (strain 972 / ATCC 24843) (Fission yeast)).